We begin with the raw amino-acid sequence, 295 residues long: Probable dTDP-4,6-dihydroxy-2-methyloxan-3-one 4-ketoreductase (295 aa).

NADH-binding positions include 10-12, 36-37, 60-62, Tyr126, and Lys130; these read GML, DV, and AYT. NADPH-binding positions include 11–12, 36–37, 60–62, Tyr126, and Lys130; these read ML, DV, and AYT. The active-site Proton donor/acceptor is the Tyr126.

This sequence belongs to the dTDP-4-dehydrorhamnose reductase family. It depends on Mg(2+) as a cofactor.

It functions in the pathway antibiotic biosynthesis. In terms of biological role, involved in the biosynthesis of one of the two 2,6-deoxysugars, dTDP-L-oleandrose, attached to the macrolactone ring oleandolide to produce the aglycone antibiotic oleandomycin. Probably catalyzes the reduction of dTDP-4-keto-2,6-dideoxy-beta-L-galactose to yield dTDP-L-olivose. This is Probable dTDP-4,6-dihydroxy-2-methyloxan-3-one 4-ketoreductase from Streptomyces antibioticus.